We begin with the raw amino-acid sequence, 176 residues long: Crossover junction endodeoxyribonuclease RuvC (176 aa).

Residues aspartate 7, glutamate 67, and aspartate 139 contribute to the active site. Mg(2+) contacts are provided by aspartate 7, glutamate 67, and aspartate 139.

This sequence belongs to the RuvC family. As to quaternary structure, homodimer which binds Holliday junction (HJ) DNA. The HJ becomes 2-fold symmetrical on binding to RuvC with unstacked arms; it has a different conformation from HJ DNA in complex with RuvA. In the full resolvosome a probable DNA-RuvA(4)-RuvB(12)-RuvC(2) complex forms which resolves the HJ. Mg(2+) is required as a cofactor.

It localises to the cytoplasm. It catalyses the reaction Endonucleolytic cleavage at a junction such as a reciprocal single-stranded crossover between two homologous DNA duplexes (Holliday junction).. Its function is as follows. The RuvA-RuvB-RuvC complex processes Holliday junction (HJ) DNA during genetic recombination and DNA repair. Endonuclease that resolves HJ intermediates. Cleaves cruciform DNA by making single-stranded nicks across the HJ at symmetrical positions within the homologous arms, yielding a 5'-phosphate and a 3'-hydroxyl group; requires a central core of homology in the junction. The consensus cleavage sequence is 5'-(A/T)TT(C/G)-3'. Cleavage occurs on the 3'-side of the TT dinucleotide at the point of strand exchange. HJ branch migration catalyzed by RuvA-RuvB allows RuvC to scan DNA until it finds its consensus sequence, where it cleaves and resolves the cruciform DNA. This chain is Crossover junction endodeoxyribonuclease RuvC, found in Pelobacter propionicus (strain DSM 2379 / NBRC 103807 / OttBd1).